A 152-amino-acid chain; its full sequence is Ribonuclease pancreatic beta-type (152 aa).

A signal peptide spans Met1–Gly25. Residues Ser31 to Ser45 show a composition bias toward basic and acidic residues. The disordered stretch occupies residues Ser31–Tyr53. Substrate-binding residues include Lys35 and Arg38. The Proton acceptor role is filled by His40. Cystine bridges form between Cys54/Cys112, Cys68/Cys123, Cys86/Cys138, and Cys93/Cys100. Substrate is bound by residues Lys69–Thr73, Lys94, and Arg113. His147 acts as the Proton donor in catalysis.

Belongs to the pancreatic ribonuclease family. As to quaternary structure, monomer.

It is found in the secreted. The enzyme catalyses an [RNA] containing cytidine + H2O = an [RNA]-3'-cytidine-3'-phosphate + a 5'-hydroxy-ribonucleotide-3'-[RNA].. It catalyses the reaction an [RNA] containing uridine + H2O = an [RNA]-3'-uridine-3'-phosphate + a 5'-hydroxy-ribonucleotide-3'-[RNA].. Functionally, endonuclease that catalyzes the cleavage of RNA on the 3' side of pyrimidine nucleotides. Acts on single-stranded and double-stranded RNA. The sequence is that of Ribonuclease pancreatic beta-type from Rattus exulans (Polynesian rat).